A 293-amino-acid chain; its full sequence is 4-diphosphocytidyl-2-C-methyl-D-erythritol kinase (293 aa).

The active site involves Lys-16. 99-109 contributes to the ATP binding site; sequence PMGAGLGGGSS. The active site involves Asp-141.

Belongs to the GHMP kinase family. IspE subfamily.

The enzyme catalyses 4-CDP-2-C-methyl-D-erythritol + ATP = 4-CDP-2-C-methyl-D-erythritol 2-phosphate + ADP + H(+). Its pathway is isoprenoid biosynthesis; isopentenyl diphosphate biosynthesis via DXP pathway; isopentenyl diphosphate from 1-deoxy-D-xylulose 5-phosphate: step 3/6. Functionally, catalyzes the phosphorylation of the position 2 hydroxy group of 4-diphosphocytidyl-2C-methyl-D-erythritol. The polypeptide is 4-diphosphocytidyl-2-C-methyl-D-erythritol kinase (Burkholderia cenocepacia (strain ATCC BAA-245 / DSM 16553 / LMG 16656 / NCTC 13227 / J2315 / CF5610) (Burkholderia cepacia (strain J2315))).